The sequence spans 457 residues: ATP synthase subunit beta (457 aa).

147–154 (GGAGVGKT) provides a ligand contact to ATP.

This sequence belongs to the ATPase alpha/beta chains family. In terms of assembly, F-type ATPases have 2 components, CF(1) - the catalytic core - and CF(0) - the membrane proton channel. CF(1) has five subunits: alpha(3), beta(3), gamma(1), delta(1), epsilon(1). CF(0) has three main subunits: a(1), b(2) and c(9-12). The alpha and beta chains form an alternating ring which encloses part of the gamma chain. CF(1) is attached to CF(0) by a central stalk formed by the gamma and epsilon chains, while a peripheral stalk is formed by the delta and b chains.

The protein resides in the cell inner membrane. The enzyme catalyses ATP + H2O + 4 H(+)(in) = ADP + phosphate + 5 H(+)(out). In terms of biological role, produces ATP from ADP in the presence of a proton gradient across the membrane. The catalytic sites are hosted primarily by the beta subunits. The protein is ATP synthase subunit beta of Haemophilus influenzae (strain PittGG).